The following is a 420-amino-acid chain: Dual-specificity RNA methyltransferase RlmN (420 aa).

Residue glutamate 115 is the Proton acceptor of the active site. A Radical SAM core domain is found at 121-388 (DADRGTLCVS…APIRTPRGRD (268 aa)). A disulfide bridge connects residues cysteine 128 and cysteine 393. 3 residues coordinate [4Fe-4S] cluster: cysteine 135, cysteine 139, and cysteine 142. S-adenosyl-L-methionine is bound by residues 217-218 (GE), serine 249, 271-273 (SLH), and asparagine 350. The active-site S-methylcysteine intermediate is cysteine 393.

It belongs to the radical SAM superfamily. RlmN family. [4Fe-4S] cluster serves as cofactor.

The protein resides in the cytoplasm. It carries out the reaction adenosine(2503) in 23S rRNA + 2 reduced [2Fe-2S]-[ferredoxin] + 2 S-adenosyl-L-methionine = 2-methyladenosine(2503) in 23S rRNA + 5'-deoxyadenosine + L-methionine + 2 oxidized [2Fe-2S]-[ferredoxin] + S-adenosyl-L-homocysteine. The catalysed reaction is adenosine(37) in tRNA + 2 reduced [2Fe-2S]-[ferredoxin] + 2 S-adenosyl-L-methionine = 2-methyladenosine(37) in tRNA + 5'-deoxyadenosine + L-methionine + 2 oxidized [2Fe-2S]-[ferredoxin] + S-adenosyl-L-homocysteine. Specifically methylates position 2 of adenine 2503 in 23S rRNA and position 2 of adenine 37 in tRNAs. m2A2503 modification seems to play a crucial role in the proofreading step occurring at the peptidyl transferase center and thus would serve to optimize ribosomal fidelity. This is Dual-specificity RNA methyltransferase RlmN from Sphingopyxis alaskensis (strain DSM 13593 / LMG 18877 / RB2256) (Sphingomonas alaskensis).